A 298-amino-acid polypeptide reads, in one-letter code: Protease HtpX homolog (298 aa).

A run of 2 helical transmembrane segments spans residues tyrosine 15 to phenylalanine 35 and alanine 39 to alanine 59. Position 143 (histidine 143) interacts with Zn(2+). The active site involves glutamate 144. Histidine 147 lines the Zn(2+) pocket. 2 helical membrane passes run isoleucine 158–tryptophan 178 and isoleucine 197–alanine 217. A Zn(2+)-binding site is contributed by glutamate 226.

Belongs to the peptidase M48B family. Zn(2+) serves as cofactor.

The protein localises to the cell membrane. This Pediococcus pentosaceus (strain ATCC 25745 / CCUG 21536 / LMG 10740 / 183-1w) protein is Protease HtpX homolog.